Here is a 319-residue protein sequence, read N- to C-terminus: tRNA dimethylallyltransferase (319 aa).

10–17 (GPTAVGKT) is an ATP binding site. 12–17 (TAVGKT) contributes to the substrate binding site. The segment at 35-38 (DSMQ) is interaction with substrate tRNA.

It belongs to the IPP transferase family. As to quaternary structure, monomer. Mg(2+) is required as a cofactor.

It catalyses the reaction adenosine(37) in tRNA + dimethylallyl diphosphate = N(6)-dimethylallyladenosine(37) in tRNA + diphosphate. In terms of biological role, catalyzes the transfer of a dimethylallyl group onto the adenine at position 37 in tRNAs that read codons beginning with uridine, leading to the formation of N6-(dimethylallyl)adenosine (i(6)A). This Symbiobacterium thermophilum (strain DSM 24528 / JCM 14929 / IAM 14863 / T) protein is tRNA dimethylallyltransferase.